The following is a 436-amino-acid chain: Putative ankyrin repeat protein FPV245 (436 aa).

ANK repeat units lie at residues 1–30 (MSVD…CINI), 34–63 (ETTT…QVNH), 67–96 (KIPN…DTSI), 98–119 (PVPC…KVNT), 123–152 (KSKT…DVNI), 156–185 (NGCY…YANV), 189–218 (YGNS…NISN), 222–252 (NGVT…DTDV), 253–283 (DGYT…DISI), and 287–317 (NGRN…LINE).

This Vertebrata (FPV) protein is Putative ankyrin repeat protein FPV245.